A 307-amino-acid polypeptide reads, in one-letter code: MKWKEIAVLTEGICIEAIAGIFHRLGSGGVVIEDPQAARKYENQEEWNPNLVSPDFLDHEFVLIKAYFMEEREVMEELQSCLETVKENFNVECKVFIDEVRDEDWESSWKKYYHRFKIGERLVIKPSWEEYQPQSGEVVIDIDPGMAFGTGIHASTRFCMKFIDHYVKGGEKLIDAGCGSGILSIAAAKLGAARVLAMDVEELSVKIARENVELNGLSDIITVKLGNIVEEIQTFEADMVAANITAEVVTCLIPEAAKVLKSGGYFFGSGIVDSRWPGVEKQLKTHGFVIEQVLQDVDWIGVAARKE.

The S-adenosyl-L-methionine site is built by T156, G177, D199, and N243.

Belongs to the methyltransferase superfamily. PrmA family.

It is found in the cytoplasm. It catalyses the reaction L-lysyl-[protein] + 3 S-adenosyl-L-methionine = N(6),N(6),N(6)-trimethyl-L-lysyl-[protein] + 3 S-adenosyl-L-homocysteine + 3 H(+). Functionally, methylates ribosomal protein L11. The chain is Ribosomal protein L11 methyltransferase from Syntrophomonas wolfei subsp. wolfei (strain DSM 2245B / Goettingen).